We begin with the raw amino-acid sequence, 55 residues long: MAKATTIKIKLLSTADTGFFYVTKKNSRTMTEKMTKTKYDPIARKHVEFKETKIK.

It belongs to the bacterial ribosomal protein bL33 family.

In Brucella abortus (strain S19), this protein is Large ribosomal subunit protein bL33.